Reading from the N-terminus, the 120-residue chain is Aspartate 1-decarboxylase (120 aa).

Catalysis depends on serine 25, which acts as the Schiff-base intermediate with substrate; via pyruvic acid. Serine 25 is subject to Pyruvic acid (Ser). Residue threonine 57 coordinates substrate. Tyrosine 58 functions as the Proton donor in the catalytic mechanism. Substrate is bound at residue 73–75 (GAA).

This sequence belongs to the PanD family. As to quaternary structure, heterooctamer of four alpha and four beta subunits. It depends on pyruvate as a cofactor. Post-translationally, is synthesized initially as an inactive proenzyme, which is activated by self-cleavage at a specific serine bond to produce a beta-subunit with a hydroxyl group at its C-terminus and an alpha-subunit with a pyruvoyl group at its N-terminus.

Its subcellular location is the cytoplasm. The catalysed reaction is L-aspartate + H(+) = beta-alanine + CO2. It functions in the pathway cofactor biosynthesis; (R)-pantothenate biosynthesis; beta-alanine from L-aspartate: step 1/1. Its function is as follows. Catalyzes the pyruvoyl-dependent decarboxylation of aspartate to produce beta-alanine. This Thermus thermophilus (strain ATCC 27634 / DSM 579 / HB8) protein is Aspartate 1-decarboxylase.